The primary structure comprises 531 residues: Peptide chain release factor 3 (531 aa).

The tr-type G domain occupies A13–K282. Residues S22–T29, D90–H94, and N144–D147 contribute to the GTP site.

The protein belongs to the TRAFAC class translation factor GTPase superfamily. Classic translation factor GTPase family. PrfC subfamily.

Its subcellular location is the cytoplasm. Its function is as follows. Increases the formation of ribosomal termination complexes and stimulates activities of RF-1 and RF-2. It binds guanine nucleotides and has strong preference for UGA stop codons. It may interact directly with the ribosome. The stimulation of RF-1 and RF-2 is significantly reduced by GTP and GDP, but not by GMP. The chain is Peptide chain release factor 3 from Psychrobacter sp. (strain PRwf-1).